Here is a 722-residue protein sequence, read N- to C-terminus: Zinc finger protein 600 (722 aa).

The segment at 162–184 (FQCNESGKAFNCSSLLRKHQIPH) adopts a C2H2-type 1; degenerate zinc-finger fold. C2H2-type zinc fingers lie at residues 190–212 (YKCD…CRCH), 218–240 (YKCN…RRLH), 246–268 (HKCN…KAIH), 274–296 (YKCN…RRIH), 302–324 (YKCE…KRIH), 330–352 (YKCK…KRIH), 358–380 (YKCN…HRLH), 386–408 (YKCK…TRIH), and 414–436 (YKCN…KSIH). A C2H2-type 11; degenerate zinc finger spans residues 442–464 (YKYEECEKVFSCGSTLETHKIIH). C2H2-type zinc fingers lie at residues 470–492 (YKCK…TRIH), 498–520 (YKCN…RRVH), 526–548 (YKCN…RRLH), 554–576 (YKCN…RRLH), 582–604 (YKCT…TRIH), 610–632 (YKCN…HRIH), 638–660 (YKCE…RRIH), 666–688 (YKCK…TGLH), and 694–716 (YKCN…QAVH).

It belongs to the krueppel C2H2-type zinc-finger protein family.

The protein localises to the nucleus. Functionally, may be involved in transcriptional regulation. This is Zinc finger protein 600 (ZNF600) from Homo sapiens (Human).